We begin with the raw amino-acid sequence, 317 residues long: Porphobilinogen deaminase (317 aa).

Cys-240 bears the S-(dipyrrolylmethanemethyl)cysteine mark.

This sequence belongs to the HMBS family. Monomer. It depends on dipyrromethane as a cofactor.

It catalyses the reaction 4 porphobilinogen + H2O = hydroxymethylbilane + 4 NH4(+). The protein operates within porphyrin-containing compound metabolism; protoporphyrin-IX biosynthesis; coproporphyrinogen-III from 5-aminolevulinate: step 2/4. In terms of biological role, tetrapolymerization of the monopyrrole PBG into the hydroxymethylbilane pre-uroporphyrinogen in several discrete steps. This is Porphobilinogen deaminase from Nitratidesulfovibrio vulgaris (strain DSM 19637 / Miyazaki F) (Desulfovibrio vulgaris).